We begin with the raw amino-acid sequence, 159 residues long: Lipoprotein signal peptidase (159 aa).

Transmembrane regions (helical) follow at residues 4 to 24 (PYFV…DQVT), 64 to 84 (MSFF…FYIK), and 88 to 108 (GNFL…GNFI). Catalysis depends on residues aspartate 118 and aspartate 136. Residues 131 to 151 (IFNGADSSLTIGVILVLIALL) traverse the membrane as a helical segment.

Belongs to the peptidase A8 family.

The protein localises to the cell membrane. The catalysed reaction is Release of signal peptides from bacterial membrane prolipoproteins. Hydrolyzes -Xaa-Yaa-Zaa-|-(S,diacylglyceryl)Cys-, in which Xaa is hydrophobic (preferably Leu), and Yaa (Ala or Ser) and Zaa (Gly or Ala) have small, neutral side chains.. Its pathway is protein modification; lipoprotein biosynthesis (signal peptide cleavage). In terms of biological role, this protein specifically catalyzes the removal of signal peptides from prolipoproteins. The polypeptide is Lipoprotein signal peptidase (Staphylococcus carnosus (strain TM300)).